Reading from the N-terminus, the 285-residue chain is Meiotically up-regulated gene 125 protein (285 aa).

The protein resides in the cytoplasm. It is found in the nucleus. Functionally, has a role in meiosis. In Schizosaccharomyces pombe (strain 972 / ATCC 24843) (Fission yeast), this protein is Meiotically up-regulated gene 125 protein (mug125).